We begin with the raw amino-acid sequence, 21 residues long: Fibrinogen beta chain (21 aa).

The residue at position 1 (Q1) is a Pyrrolidone carboxylic acid. Y6 is subject to Sulfotyrosine.

In terms of assembly, heterohexamer; disulfide linked. Contains 2 sets of 3 non-identical chains (alpha, beta and gamma). The 2 heterotrimers are in head to head conformation with the N-termini in a small central domain. In terms of processing, conversion of fibrinogen to fibrin is triggered by thrombin, which cleaves fibrinopeptides A and B from alpha and beta chains, and thus exposes the N-terminal polymerization sites responsible for the formation of the soft clot.

It localises to the secreted. In terms of biological role, cleaved by the protease thrombin to yield monomers which, together with fibrinogen alpha (FGA) and fibrinogen gamma (FGG), polymerize to form an insoluble fibrin matrix. Fibrin has a major function in hemostasis as one of the primary components of blood clots. In addition, functions during the early stages of wound repair to stabilize the lesion and guide cell migration during re-epithelialization. Was originally thought to be essential for platelet aggregation, based on in vitro studies using anticoagulated blood. However subsequent studies have shown that it is not absolutely required for thrombus formation in vivo. Enhances expression of SELP in activated platelets. Maternal fibrinogen is essential for successful pregnancy. Fibrin deposition is also associated with infection, where it protects against IFNG-mediated hemorrhage. May also facilitate the antibacterial immune response via both innate and T-cell mediated pathways. This Odocoileus hemionus (Mule deer) protein is Fibrinogen beta chain (FGB).